The chain runs to 226 residues: Thymidylate kinase (226 aa).

Residue 20–27 (GGEGAGKS) participates in ATP binding.

It belongs to the thymidylate kinase family.

The catalysed reaction is dTMP + ATP = dTDP + ADP. Phosphorylation of dTMP to form dTDP in both de novo and salvage pathways of dTTP synthesis. The chain is Thymidylate kinase from Bradyrhizobium sp. (strain ORS 278).